The chain runs to 365 residues: MMDKNAPRGTRTGFTTGACSAAAARAATLGLVTGQVPDRIECLLPNGDLVTFSVLDGAVNGDTAHAMVIKDAGDDPDCTDKAHLTADVTLRRDLPGQVLLTGGFGVGTVTMPGLGLTVGGPAINPVPRRNITANVQAAAGELLDEAGFEVCISVPQGVEMARKTLNARLGILGGISILGTTGIVKPYSTAAYRASVVQGVQVAGTLGHGVVVLTTGGRTEKFVMAEMPHLPEPAFVQMGDFLRYAMSAAVKAGLKQVVIGGMVGKLTKIAQGETITHAGRAEVDTGLLADIAAGLGAAPEVCEAIRQNETARYAGERMDALGLGTAFHTALAQRVIQTLQARYPDKFDLKVLVCDFDGRKIAEAP.

The protein belongs to the CbiD family.

The enzyme catalyses Co-precorrin-5B + S-adenosyl-L-methionine = Co-precorrin-6A + S-adenosyl-L-homocysteine. It functions in the pathway cofactor biosynthesis; adenosylcobalamin biosynthesis; cob(II)yrinate a,c-diamide from sirohydrochlorin (anaerobic route): step 6/10. Catalyzes the methylation of C-1 in cobalt-precorrin-5B to form cobalt-precorrin-6A. This is Cobalt-precorrin-5B C(1)-methyltransferase from Polaromonas naphthalenivorans (strain CJ2).